A 561-amino-acid polypeptide reads, in one-letter code: DNA ligase B (561 aa).

Residue Lys-128 is the N6-AMP-lysine intermediate of the active site.

Belongs to the NAD-dependent DNA ligase family. LigB subfamily.

The enzyme catalyses NAD(+) + (deoxyribonucleotide)n-3'-hydroxyl + 5'-phospho-(deoxyribonucleotide)m = (deoxyribonucleotide)n+m + AMP + beta-nicotinamide D-nucleotide.. Its function is as follows. Catalyzes the formation of phosphodiester linkages between 5'-phosphoryl and 3'-hydroxyl groups in double-stranded DNA using NAD as a coenzyme and as the energy source for the reaction. The sequence is that of DNA ligase B from Pseudomonas syringae pv. syringae (strain B728a).